Consider the following 255-residue polypeptide: Large ribosomal subunit protein uL4 (255 aa).

This sequence belongs to the universal ribosomal protein uL4 family. In terms of assembly, part of the 50S ribosomal subunit.

In terms of biological role, one of the primary rRNA binding proteins, this protein initially binds near the 5'-end of the 23S rRNA. It is important during the early stages of 50S assembly. It makes multiple contacts with different domains of the 23S rRNA in the assembled 50S subunit and ribosome. Functionally, forms part of the polypeptide exit tunnel. This Thermococcus kodakarensis (strain ATCC BAA-918 / JCM 12380 / KOD1) (Pyrococcus kodakaraensis (strain KOD1)) protein is Large ribosomal subunit protein uL4.